Consider the following 371-residue polypeptide: Aminomethyltransferase (371 aa).

It belongs to the GcvT family. In terms of assembly, the glycine cleavage system is composed of four proteins: P, T, L and H.

The enzyme catalyses N(6)-[(R)-S(8)-aminomethyldihydrolipoyl]-L-lysyl-[protein] + (6S)-5,6,7,8-tetrahydrofolate = N(6)-[(R)-dihydrolipoyl]-L-lysyl-[protein] + (6R)-5,10-methylene-5,6,7,8-tetrahydrofolate + NH4(+). In terms of biological role, the glycine cleavage system catalyzes the degradation of glycine. This is Aminomethyltransferase from Cellvibrio japonicus (strain Ueda107) (Pseudomonas fluorescens subsp. cellulosa).